A 150-amino-acid chain; its full sequence is Large ribosomal subunit protein bL9 (150 aa).

This sequence belongs to the bacterial ribosomal protein bL9 family.

Binds to the 23S rRNA. The polypeptide is Large ribosomal subunit protein bL9 (Thioalkalivibrio sulfidiphilus (strain HL-EbGR7)).